The following is a 511-amino-acid chain: Probable eukaryotic translation initiation factor 4H (511 aa).

2 disordered regions span residues 25–63 (SWAD…DRGS) and 154–511 (TIRV…EVKI). Positions 39-51 (AREESGSGLKRGD) are enriched in basic and acidic residues. Residues 86 to 162 (FTAFIGNLSF…RTIRVNVAEA (77 aa)) enclose the RRM domain. Residues 179-196 (WRRSTPLASRESSSQPSR) are compositionally biased toward polar residues. Composition is skewed to basic and acidic residues over residues 230–247 (VRRD…RDPG) and 261–270 (LAEKVDRDVP). A compositionally biased stretch (polar residues) spans 285–318 (LADTEQTWSRGTKLRTPTTTSRQSSADSTPSSGA). Positions 331 to 349 (TAGSPSATANATPAAPASG) are enriched in low complexity. A Phosphoserine modification is found at S334. Basic and acidic residues-rich tracts occupy residues 360–388 (AARE…EKQK) and 394–419 (KPVE…DKVA). Low complexity predominate over residues 420–434 (GKPTTAPATTTNTGA). Residues 438 to 448 (GSADRAKKDEQ) show a composition bias toward basic and acidic residues. Polar residues predominate over residues 451–467 (EQVQPSRKSSQTGATSE). Positions 502 to 511 (VTKGVEEVKI) are enriched in basic and acidic residues.

It localises to the cytoplasm. Its subcellular location is the P-body. Probable translation initiation factor. This Cryptococcus neoformans var. grubii serotype A (strain H99 / ATCC 208821 / CBS 10515 / FGSC 9487) (Filobasidiella neoformans var. grubii) protein is Probable eukaryotic translation initiation factor 4H.